The sequence spans 242 residues: 1-(5-phosphoribosyl)-5-[(5-phosphoribosylamino)methylideneamino] imidazole-4-carboxamide isomerase (242 aa).

The Proton acceptor role is filled by aspartate 8. Aspartate 129 (proton donor) is an active-site residue.

Belongs to the HisA/HisF family.

Its subcellular location is the cytoplasm. The catalysed reaction is 1-(5-phospho-beta-D-ribosyl)-5-[(5-phospho-beta-D-ribosylamino)methylideneamino]imidazole-4-carboxamide = 5-[(5-phospho-1-deoxy-D-ribulos-1-ylimino)methylamino]-1-(5-phospho-beta-D-ribosyl)imidazole-4-carboxamide. It functions in the pathway amino-acid biosynthesis; L-histidine biosynthesis; L-histidine from 5-phospho-alpha-D-ribose 1-diphosphate: step 4/9. This chain is 1-(5-phosphoribosyl)-5-[(5-phosphoribosylamino)methylideneamino] imidazole-4-carboxamide isomerase, found in Clostridium botulinum (strain Kyoto / Type A2).